A 468-amino-acid chain; its full sequence is Glutamate--tRNA ligase (468 aa).

A 'HIGH' region motif is present at residues proline 9–glycine 19. The Zn(2+) site is built by cysteine 98, cysteine 100, cysteine 125, and aspartate 127. The 'KMSKS' region motif lies at lysine 235–arginine 239. Position 238 (lysine 238) interacts with ATP.

It belongs to the class-I aminoacyl-tRNA synthetase family. Glutamate--tRNA ligase type 1 subfamily. Monomer. Requires Zn(2+) as cofactor.

The protein localises to the cytoplasm. It carries out the reaction tRNA(Glu) + L-glutamate + ATP = L-glutamyl-tRNA(Glu) + AMP + diphosphate. In terms of biological role, catalyzes the attachment of glutamate to tRNA(Glu) in a two-step reaction: glutamate is first activated by ATP to form Glu-AMP and then transferred to the acceptor end of tRNA(Glu). The protein is Glutamate--tRNA ligase of Idiomarina loihiensis (strain ATCC BAA-735 / DSM 15497 / L2-TR).